A 33-amino-acid polypeptide reads, in one-letter code: GLLSGLKKVGKHVAKNVAVSLMDSLKCKISGDC.

Cys27 and Cys33 are oxidised to a cystine.

In terms of tissue distribution, expressed by the skin glands.

It is found in the secreted. Antibacterial activity against Gram-positive bacterium S.aureus and Gram-negative bacterium E.coli. No activity against C.albicans. The protein is Ranatuerin-1T of Rana temporaria (European common frog).